We begin with the raw amino-acid sequence, 186 residues long: Archaemetzincin (186 aa).

Residue His136 participates in Zn(2+) binding. The active-site Proton acceptor is Glu137. Zn(2+) is bound by residues His140, His146, Cys147, Cys152, Cys171, and Cys174.

It belongs to the peptidase M54 family. As to quaternary structure, monomer. Zn(2+) serves as cofactor.

Probable zinc metalloprotease whose natural substrate is unknown. The sequence is that of Archaemetzincin from Thermococcus kodakarensis (strain ATCC BAA-918 / JCM 12380 / KOD1) (Pyrococcus kodakaraensis (strain KOD1)).